Here is a 1670-residue protein sequence, read N- to C-terminus: Collagen alpha-3(IV) chain (1670 aa).

A signal peptide spans 1 to 28 (MSARTAPRPQVLLLPLLLVLLAAAPAAS). A 7S domain region spans residues 29–42 (KGCVCKDKGQCFCD). The tract at residues 43–1438 (GAKGEKGEKG…KGKRGDSGSP (1396 aa)) is triple-helical region. 3 disordered regions span residues 49–78 (GEKGFPGPPGSPGQKGFTGPEGLPGPQGPK), 167–469 (LDAK…DGPK), and 502–1442 (GRQG…ATWT). Residues 176–200 (PGAPGPQGLPGPPGFPGPVGPPGPP) are compositionally biased toward pro residues. The span at 202–212 (FFGFPGAMGPR) shows a compositional bias: low complexity. Over residues 217 to 231 (HMGERVIGHKGERGV) the composition is skewed to basic and acidic residues. Over residues 242–251 (GTVIVTLTGP) the composition is skewed to low complexity. The N-linked (GlcNAc...) asparagine glycan is linked to N253. Positions 253–266 (NRTDLKGEKGDKGA) are enriched in basic and acidic residues. Positions 382-394 (SPGSSRPGLRGAP) are enriched in low complexity. Over residues 402-411 (SKGERGRPGK) the composition is skewed to basic and acidic residues. Residues 415 to 428 (GTPGSPGCAGSPGL) show a composition bias toward low complexity. 3 stretches are compositionally biased toward pro residues: residues 429 to 438 (PGSPGPPGPP), 598 to 618 (PGDPGSPGSPGPAGPAGPPGY), and 654 to 675 (VPGPPGPPGPPGHPGPQGPPGI). The short motif at 791-793 (RGD) is the Cell attachment site element. Pro residues predominate over residues 900-909 (IGPPGPPGNP). The segment covering 974–987 (VPGMPGLKGLKGLP) has biased composition (low complexity). Residues 996 to 998 (RGD) carry the Cell attachment site motif. Composition is skewed to low complexity over residues 1013–1025 (IPGSMGNMGMPGS), 1094–1105 (LGPAGPEGAPGS), and 1118–1133 (HGDLGFKGIKGLLGPP). Positions 1135–1148 (IRGPPGLPGFPGSP) are enriched in pro residues. Positions 1154-1156 (RGD) match the Cell attachment site motif. Composition is skewed to low complexity over residues 1230 to 1250 (PGAIIPGQTGNRGPPGSRGSP) and 1290 to 1299 (PPGRLGAPGT). The Cell attachment site signature appears at 1306-1308 (RGD). Residues 1332–1341 (PPGPIGPKGP) show a composition bias toward pro residues. 2 consecutive short sequence motifs (cell attachment site) follow at residues 1345–1347 (RGD) and 1432–1434 (RGD). Residues 1427–1444 (GLKGKRGDSGSPATWTTR) form an epitope recognized by Goodpasture antibodies region. The Collagen IV NC1 domain maps to 1445–1669 (GFVFTRHSQT…SRCQVCMKKR (225 aa)). Disulfide bonds link C1460–C1551, C1493–C1548, C1505–C1511, C1570–C1665, C1604–C1662, and C1616–C1622. The tract at residues 1479-1557 (NQRAHGQDLG…CTVCEGPAIA (79 aa)) is required for the anti-angiogenic activity of tumstatin. M1533 is covalently cross-linked (S-Lysyl-methionine sulfilimine (Met-Lys) (interchain with K-1651)). Positions 1610 to 1628 (ASPFLECHGRGTCNYYSNS) are required for the anti-tumor cell activity of tumstatin. Residue K1651 forms an S-Lysyl-methionine sulfilimine (Lys-Met) (interchain with M-1533) linkage.

The protein belongs to the type IV collagen family. In terms of assembly, there are six type IV collagen isoforms, alpha 1(IV)-alpha 6(IV), each of which can form a triple helix structure with 2 other chains to generate type IV collagen network. The alpha 3(IV) chain forms a triple helical protomer with alpha 4(IV) and alpha 5(IV); this triple helical structure dimerizes through NC1-NC1 domain interactions such that the alpha 3(IV), alpha 4(IV) and alpha 5(IV) chains of one protomer connect with the alpha 5(IV), alpha 4(IV) and alpha 3(IV) chains of the opposite promoter, respectively. Interacts with ITGB3. Associates with LAMB2 at the neuromuscular junction and in GBM. Post-translationally, prolines at the third position of the tripeptide repeating unit (G-X-Y) are hydroxylated in some or all of the chains. Isoform 2 contains an additional N-linked glycosylation site. In terms of processing, type IV collagens contain numerous cysteine residues which are involved in inter- and intramolecular disulfide bonding. 12 of these, located in the NC1 domain, are conserved in all known type IV collagens. Post-translationally, the trimeric structure of the NC1 domains is stabilized by covalent bonds between Lys and Met residues. Phosphorylated. Thought to be phosphorylated by CERT, but CERT does not have kinase activity. In terms of tissue distribution, alpha 3 and alpha 4 type IV collagens are colocalized and present in kidney, eye, basement membranes of lens capsule, cochlea, lung, skeletal muscle, aorta, synaptic fibers, fetal kidney and fetal lung. PubMed:8083201 reports similar levels of expression of alpha 3 and alpha 4 type IV collagens in kidney, but PubMed:7523402 reports that in kidney levels of alpha 3 type IV collagen are significantly lower than those of alpha 4 type IV collagen. According to PubMed:8083201, alpha 3 type IV collagen is not detected in heart, brain, placenta, liver, pancreas, extrasynaptic muscle fibers, endoneurial and perineurial nerves, fetal brain, fetal heart and fetal liver. According to PubMed:7523402, alpha 3 type IV collagen is strongly expressed in pancreas, neuroretina and calvaria and not expressed in adrenal, ileum and skin. Isoform 1 and isoform 3 are strongly expressed in kidney, lung, suprarenal capsule, muscle and spleen, in each of these tissues isoform 1 is more abundant than isoform 3. Isoform 1 and isoform 3 are expressed at low levels in artery, fat, pericardium and peripherical nerve, but not in placenta, mesangium, skin, pleura and cultured umbilical endothelial cells.

The protein localises to the secreted. It is found in the extracellular space. Its subcellular location is the extracellular matrix. It localises to the basement membrane. In terms of biological role, type IV collagen is the major structural component of glomerular basement membranes (GBM), forming a 'chicken-wire' meshwork together with laminins, proteoglycans and entactin/nidogen. Functionally, tumstatin, a cleavage fragment corresponding to the collagen alpha 3(IV) NC1 domain, possesses both anti-angiogenic and anti-tumor cell activity; these two anti-tumor properties may be regulated via RGD-independent ITGB3-mediated mechanisms. This Homo sapiens (Human) protein is Collagen alpha-3(IV) chain (COL4A3).